Here is a 728-residue protein sequence, read N- to C-terminus: Polyphosphate kinase (728 aa).

Asn-57 contributes to the ATP binding site. 2 residues coordinate Mg(2+): Arg-408 and Arg-438. Residue His-468 is the Phosphohistidine intermediate of the active site. Positions 501, 597, and 625 each coordinate ATP. A disordered region spans residues 694 to 728; the sequence is VQRRPASPEQSQSSQAIFTAQAIAETTEDPELRSV. The segment covering 695-709 has biased composition (low complexity); the sequence is QRRPASPEQSQSSQA.

Belongs to the polyphosphate kinase 1 (PPK1) family. The cofactor is Mg(2+). In terms of processing, an intermediate of this reaction is the autophosphorylated ppk in which a phosphate is covalently linked to a histidine residue through a N-P bond.

The enzyme catalyses [phosphate](n) + ATP = [phosphate](n+1) + ADP. Functionally, catalyzes the reversible transfer of the terminal phosphate of ATP to form a long-chain polyphosphate (polyP). This Synechocystis sp. (strain ATCC 27184 / PCC 6803 / Kazusa) protein is Polyphosphate kinase.